Reading from the N-terminus, the 299-residue chain is Phosphatidylserine decarboxylase proenzyme (299 aa).

Residues Asp-90, His-147, and Ser-254 each act as charge relay system; for autoendoproteolytic cleavage activity in the active site. The active-site Schiff-base intermediate with substrate; via pyruvic acid; for decarboxylase activity is the Ser-254. A Pyruvic acid (Ser); by autocatalysis modification is found at Ser-254.

Belongs to the phosphatidylserine decarboxylase family. PSD-B subfamily. Prokaryotic type I sub-subfamily. Heterodimer of a large membrane-associated beta subunit and a small pyruvoyl-containing alpha subunit. The cofactor is pyruvate. In terms of processing, is synthesized initially as an inactive proenzyme. Formation of the active enzyme involves a self-maturation process in which the active site pyruvoyl group is generated from an internal serine residue via an autocatalytic post-translational modification. Two non-identical subunits are generated from the proenzyme in this reaction, and the pyruvate is formed at the N-terminus of the alpha chain, which is derived from the carboxyl end of the proenzyme. The autoendoproteolytic cleavage occurs by a canonical serine protease mechanism, in which the side chain hydroxyl group of the serine supplies its oxygen atom to form the C-terminus of the beta chain, while the remainder of the serine residue undergoes an oxidative deamination to produce ammonia and the pyruvoyl prosthetic group on the alpha chain. During this reaction, the Ser that is part of the protease active site of the proenzyme becomes the pyruvoyl prosthetic group, which constitutes an essential element of the active site of the mature decarboxylase.

It is found in the cell membrane. It carries out the reaction a 1,2-diacyl-sn-glycero-3-phospho-L-serine + H(+) = a 1,2-diacyl-sn-glycero-3-phosphoethanolamine + CO2. It functions in the pathway phospholipid metabolism; phosphatidylethanolamine biosynthesis; phosphatidylethanolamine from CDP-diacylglycerol: step 2/2. Functionally, catalyzes the formation of phosphatidylethanolamine (PtdEtn) from phosphatidylserine (PtdSer). This Erwinia tasmaniensis (strain DSM 17950 / CFBP 7177 / CIP 109463 / NCPPB 4357 / Et1/99) protein is Phosphatidylserine decarboxylase proenzyme.